A 557-amino-acid chain; its full sequence is 2-succinyl-5-enolpyruvyl-6-hydroxy-3-cyclohexene-1-carboxylate synthase (557 aa).

It belongs to the TPP enzyme family. MenD subfamily. As to quaternary structure, homodimer. The cofactor is Mg(2+). Mn(2+) is required as a cofactor. Requires thiamine diphosphate as cofactor.

The enzyme catalyses isochorismate + 2-oxoglutarate + H(+) = 5-enolpyruvoyl-6-hydroxy-2-succinyl-cyclohex-3-ene-1-carboxylate + CO2. Its pathway is quinol/quinone metabolism; 1,4-dihydroxy-2-naphthoate biosynthesis; 1,4-dihydroxy-2-naphthoate from chorismate: step 2/7. It functions in the pathway quinol/quinone metabolism; menaquinone biosynthesis. Its function is as follows. Catalyzes the thiamine diphosphate-dependent decarboxylation of 2-oxoglutarate and the subsequent addition of the resulting succinic semialdehyde-thiamine pyrophosphate anion to isochorismate to yield 2-succinyl-5-enolpyruvyl-6-hydroxy-3-cyclohexene-1-carboxylate (SEPHCHC). This Phocaeicola vulgatus (strain ATCC 8482 / DSM 1447 / JCM 5826 / CCUG 4940 / NBRC 14291 / NCTC 11154) (Bacteroides vulgatus) protein is 2-succinyl-5-enolpyruvyl-6-hydroxy-3-cyclohexene-1-carboxylate synthase.